The sequence spans 124 residues: Protein RibT (124 aa).

The N-acetyltransferase domain maps to 3-124 (IRYKKSFEKI…QQDQDISYNN (122 aa)).

Functionally, involved in riboflavin biosynthesis. In Bacillus subtilis (strain 168), this protein is Protein RibT (ribT).